The following is a 360-amino-acid chain: WD repeat domain phosphoinositide-interacting protein 4 (360 aa).

WD repeat units follow at residues 1-34 (MTQQ…IYNV), 40-84 (KGHL…IWDD), 92-128 (KEKL…VYSF), 133-174 (RKLF…LVDL), 183-222 (SAPF…LFDT), 227-266 (KLVE…IFAL), and 284-329 (GPMI…ICVD). The L/FRRG motif signature appears at 231–234 (LRRG).

It belongs to the WD repeat PROPPIN family. In terms of assembly, interacts with WIPI1. Interacts with WIPI2. Interacts with ATG2A and ATG2B. Interacts with ULK1. May interact with the PRKAA1, PRKAA2, PRKAB1 and PRKAG1 subunits of the AMPK kinase. May interact with NUDC. Ubiquitously expressed, with high expression in skeletal muscle and heart. Weakly expressed in liver and placenta. Expression is down-regulated in pancreatic and in kidney tumors.

It is found in the preautophagosomal structure. It localises to the cytoplasm. Its activity is regulated as follows. Activated upon amino-acid starvation. Component of the autophagy machinery that controls the major intracellular degradation process by which cytoplasmic materials are packaged into autophagosomes and delivered to lysosomes for degradation. Binds phosphatidylinositol 3-phosphate (PtdIns3P). Activated by the STK11/AMPK signaling pathway upon starvation, WDR45 is involved in autophagosome assembly downstream of WIPI2, regulating the size of forming autophagosomes. Together with WIPI1, promotes ATG2 (ATG2A or ATG2B)-mediated lipid transfer by enhancing ATG2-association with phosphatidylinositol 3-monophosphate (PI3P)-containing membranes. Probably recruited to membranes through its PtdIns3P activity. The chain is WD repeat domain phosphoinositide-interacting protein 4 (WDR45) from Homo sapiens (Human).